A 4599-amino-acid polypeptide reads, in one-letter code: Low-density lipoprotein receptor-related protein 1B (4599 aa).

Positions 1–20 (MSEFLLALLTLSGLLPIARV) are cleaved as a signal peptide. Residues 25 to 4444 (ADRDQQLCDP…KSDHISTRSI (4420 aa)) are Extracellular-facing. LDL-receptor class A domains lie at 31 to 70 (LCDP…DTCP) and 76 to 114 (KCPL…VHCQ). Disulfide bonds link Cys-32–Cys-45, Cys-39–Cys-58, Cys-52–Cys-69, Cys-77–Cys-90, Cys-84–Cys-103, Cys-97–Cys-113, Cys-120–Cys-129, Cys-125–Cys-138, Cys-140–Cys-153, Cys-159–Cys-169, Cys-165–Cys-178, and Cys-180–Cys-193. One can recognise an EGF-like 1 domain in the interval 116-154 (LLSNCQQLNCQYKCTMVRNSTRCYCEDGFEITEDGRSCK). Asn-134 is a glycosylation site (N-linked (GlcNAc...) asparagine). In terms of domain architecture, EGF-like 2; calcium-binding spans 155 to 194 (DQDECAVYGTCSQTCRNTHGSYTCSCVEGYLMQPDNRSCK). N-linked (GlcNAc...) asparagine glycosylation is found at Asn-190, Asn-220, Asn-313, and Asn-360. LDL-receptor class B repeat units lie at residues 295-337 (RNLY…DPIA), 338-381 (GKLF…DLVN), and 382-425 (KLVY…FEDY). Asn-443 carries an N-linked (GlcNAc...) asparagine glycan. The EGF-like 3 domain maps to 471 to 517 (RSHACEVDPYGMPGGCSHICLLSSSYKTRTCRCRTGFNLGSDGRSCK). LDL-receptor class B repeat units follow at residues 568–610 (NYIY…DWIG), 611–656 (NNLY…DPVN), 657–706 (GWMY…DFHT), and 707–750 (NTLY…HGNY). N-linked (GlcNAc...) asparagine glycans are attached at residues Asn-725 and Asn-758. The 41-residue stretch at 794 to 834 (GDNMCRVNNGGCSTLCLAIPGGRVCACADNQLLDENGTTCT) folds into the EGF-like 4 domain. Cystine bridges form between Cys-798-Cys-809, Cys-805-Cys-818, Cys-820-Cys-833, Cys-845-Cys-857, Cys-852-Cys-870, and Cys-864-Cys-881. N-linked (GlcNAc...) asparagine glycosylation is present at Asn-829. The LDL-receptor class A 3 domain occupies 844–882 (ICKAGEFRCKNRHCIQARWKCDGDDDCLDGSDEDSVNCF). The N-linked (GlcNAc...) asparagine glycan is linked to Asn-883. LDL-receptor class A domains are found at residues 885-923 (SCPD…QTCT), 926-963 (TCQV…ASCE), 966-1003 (TCEP…VGCV), 1005-1043 (SCFD…INCT), 1052-1089 (GCNG…KGCN), 1094-1132 (LCDH…DDCD), and 1135-1174 (LCGP…YLCD). Intrachain disulfides connect Cys-886-Cys-898, Cys-893-Cys-911, Cys-905-Cys-922, Cys-927-Cys-939, Cys-934-Cys-952, Cys-946-Cys-962, Cys-967-Cys-980, Cys-975-Cys-993, Cys-987-Cys-1002, Cys-1006-Cys-1018, Cys-1013-Cys-1031, Cys-1025-Cys-1042, Cys-1053-Cys-1066, Cys-1060-Cys-1079, and Cys-1073-Cys-1088. Asn-919 carries N-linked (GlcNAc...) asparagine glycosylation. Residue Asn-1041 is glycosylated (N-linked (GlcNAc...) asparagine). The N-linked (GlcNAc...) asparagine glycan is linked to Asn-1089. Intrachain disulfides connect Cys-1095/Cys-1109, Cys-1103/Cys-1122, Cys-1116/Cys-1131, Cys-1136/Cys-1150, Cys-1143/Cys-1163, and Cys-1157/Cys-1173. N-linked (GlcNAc...) asparagine glycosylation is present at Asn-1145. 2 EGF-like domains span residues 1174–1213 (DECS…KTCE) and 1214–1253 (IVDY…ESCT). An N-linked (GlcNAc...) asparagine glycan is attached at Asn-1209. A glycan (N-linked (GlcNAc...) asparagine) is linked at Asn-1298. LDL-receptor class B repeat units lie at residues 1300 to 1346 (SLLY…DWIA), 1347 to 1389 (GNIY…DPRY), 1390 to 1436 (GILF…DHFE), 1437 to 1480 (KRIV…LYGS), and 1481 to 1522 (EVYW…YHPS). 3 N-linked (GlcNAc...) asparagine glycosylation sites follow: Asn-1502, Asn-1549, and Asn-1636. The region spanning 1527–1570 (APNPCAANDGKGPCSHMCLINHNRSAACACPHLMKLSSDKKTCY) is the EGF-like 7 domain. 4 LDL-receptor class B repeats span residues 1618–1660 (ERLY…DWVS), 1661–1704 (RNLY…HPVR), 1705–1744 (GKLY…DYVE), and 1745–1787 (NKLY…TIMD). N-linked (GlcNAc...) asparagine glycans are attached at residues Asn-1754 and Asn-1816. The region spanning 1834 to 1875 (GSNSCQLNNGGCSQLCLPTSETTRTCMCTVGYYLQKNRMSCQ) is the EGF-like 8 domain. Intrachain disulfides connect Cys-1838–Cys-1849, Cys-1845–Cys-1859, and Cys-1861–Cys-1874. Asn-1921 carries an N-linked (GlcNAc...) asparagine glycan. LDL-receptor class B repeat units follow at residues 1922-1964 (DTIY…DWIA), 1965-2007 (GNIY…HPEK), 2008-2051 (GLLF…DYEE), and 2052-2095 (NKLY…FGAY). The N-linked (GlcNAc...) asparagine glycan is linked to Asn-1983. Residue Asn-2105 is glycosylated (N-linked (GlcNAc...) asparagine). Residues 2143–2183 (GTNVCARDNGGCKQLCLYRGNSRRTCACAHGYLAEDGVTCL) form the EGF-like 9 domain. Disulfide bonds link Cys-2147–Cys-2158, Cys-2154–Cys-2168, and Cys-2170–Cys-2182. LDL-receptor class B repeat units lie at residues 2239-2280 (NRIF…HRAW), 2281-2329 (DTLY…DECQ), 2330-2374 (NLMF…DYRA), 2375-2416 (EKLY…VYDN), and 2417-2459 (YIFW…VAND). N-linked (GlcNAc...) asparagine glycosylation is found at Asn-2458, Asn-2488, and Asn-2507. In terms of domain architecture, EGF-like 10 spans 2464 to 2504 (ELSPCALLNGGCHDLCLLTPNGRVNCSCRGDRILLEDNRCV). In terms of domain architecture, LDL-receptor class A 11 spans 2509 to 2548 (SCNAYSEFECGNGECIDYQLTCDGIPHCKDKSDEKLLYCE). Disulfide bonds link Cys-2510/Cys-2523, Cys-2518/Cys-2536, and Cys-2530/Cys-2547. A glycan (N-linked (GlcNAc...) asparagine) is linked at Asn-2549. LDL-receptor class A domains follow at residues 2551 to 2587 (SCRR…LDCK), 2590 to 2626 (TCAT…KNCN), 2629 to 2675 (DCTH…LKCP), 2681 to 2717 (KCEE…FHCD), 2719 to 2757 (SCSW…SICG), and 2760 to 2800 (TCAA…AGCA). Cystine bridges form between Cys-2552-Cys-2564, Cys-2559-Cys-2577, Cys-2571-Cys-2586, Cys-2591-Cys-2603, Cys-2598-Cys-2616, and Cys-2610-Cys-2625. Asn-2626 and Asn-2647 each carry an N-linked (GlcNAc...) asparagine glycan. 12 disulfide bridges follow: Cys-2630–Cys-2652, Cys-2646–Cys-2665, Cys-2659–Cys-2674, Cys-2682–Cys-2694, Cys-2689–Cys-2707, Cys-2701–Cys-2716, Cys-2720–Cys-2732, Cys-2727–Cys-2745, Cys-2739–Cys-2756, Cys-2761–Cys-2774, Cys-2768–Cys-2787, and Cys-2781–Cys-2799. Asn-2802 is a glycosylation site (N-linked (GlcNAc...) asparagine). LDL-receptor class A domains follow at residues 2804–2841 (TCDE…PQCG), 2844–2885 (QCGT…PKCK), and 2890–2926 (SCNS…RNCH). 15 disulfides stabilise this stretch: Cys-2805-Cys-2817, Cys-2812-Cys-2830, Cys-2824-Cys-2840, Cys-2845-Cys-2857, Cys-2852-Cys-2871, Cys-2865-Cys-2884, Cys-2891-Cys-2903, Cys-2898-Cys-2916, Cys-2910-Cys-2925, Cys-2930-Cys-2942, Cys-2938-Cys-2951, Cys-2953-Cys-2966, Cys-2972-Cys-2982, Cys-2978-Cys-2991, and Cys-2993-Cys-3007. A glycan (N-linked (GlcNAc...) asparagine) is linked at Asn-2892. The 41-residue stretch at 2927-2967 (INECLSKKVSGCSQDCQDLPVSYKCKCWPGFQLKDDGKTCV) folds into the EGF-like 11 domain. The region spanning 2968 to 3008 (DIDECSSGFPCSQQCINTYGTYKCLCTDGYEIQPDNPNGCK) is the EGF-like 12; calcium-binding domain. 3 N-linked (GlcNAc...) asparagine glycosylation sites follow: Asn-3034, Asn-3066, and Asn-3076. LDL-receptor class B repeat units follow at residues 3055-3098 (EFIY…DWIG), 3099-3141 (KNLY…DPQA), 3142-3185 (GYLY…DYVN), 3186-3224 (RRLY…TLFE), and 3225-3268 (DYIY…HSYR). A glycan (N-linked (GlcNAc...) asparagine) is linked at Asn-3164. An EGF-like 13 domain is found at 3273 to 3314 (SKHLCMINNGGCSHLCLLAPGKTHTCACPTNFYLAADNRTCL). 2 N-linked (GlcNAc...) asparagine glycosylation sites follow: Asn-3310 and Asn-3316. LDL-receptor class A domains are found at residues 3316 to 3353 (NCTA…DDCP), 3356 to 3392 (RCQP…LNCD), 3395 to 3432 (VCLS…RDCP), 3435 to 3472 (SCSP…ANCD), 3475 to 3511 (TCGP…ENCK), 3514 to 3550 (TCTL…RNCE), 3552 to 3588 (SCSK…KSCE), 3593 to 3629 (TCSS…MDCV), 3631 to 3668 (ECKE…ENCE), 3673 to 3711 (ICRA…DMCV), 3714 to 3752 (LCPS…DHCG), and 3761 to 3797 (PCKK…QGCR). 42 disulfides stabilise this stretch: Cys-3317–Cys-3329, Cys-3324–Cys-3342, Cys-3336–Cys-3352, Cys-3357–Cys-3369, Cys-3364–Cys-3382, Cys-3376–Cys-3391, Cys-3396–Cys-3409, Cys-3403–Cys-3422, Cys-3416–Cys-3431, Cys-3436–Cys-3449, Cys-3443–Cys-3462, Cys-3456–Cys-3471, Cys-3476–Cys-3488, Cys-3483–Cys-3501, Cys-3495–Cys-3510, Cys-3515–Cys-3527, Cys-3522–Cys-3540, Cys-3534–Cys-3549, Cys-3553–Cys-3565, Cys-3560–Cys-3578, Cys-3572–Cys-3587, Cys-3594–Cys-3606, Cys-3601–Cys-3619, Cys-3613–Cys-3628, Cys-3632–Cys-3645, Cys-3639–Cys-3658, Cys-3652–Cys-3667, Cys-3674–Cys-3686, Cys-3681–Cys-3699, Cys-3693–Cys-3710, Cys-3715–Cys-3729, Cys-3723–Cys-3742, Cys-3736–Cys-3751, Cys-3762–Cys-3774, Cys-3769–Cys-3787, Cys-3781–Cys-3796, Cys-3805–Cys-3818, Cys-3812–Cys-3827, Cys-3829–Cys-3842, Cys-3848–Cys-3858, Cys-3854–Cys-3867, and Cys-3869–Cys-3880. Residue Asn-3682 is glycosylated (N-linked (GlcNAc...) asparagine). EGF-like domains follow at residues 3801–3843 (TEYT…RQCE) and 3844–3881 (DLNE…NTCI). Residues Asn-3877, Asn-3894, and Asn-3906 are each glycosylated (N-linked (GlcNAc...) asparagine). LDL-receptor class B repeat units follow at residues 3933 to 3980 (DMII…DWVA), 3981 to 4038 (GNIY…NPKR), 4039 to 4082 (GMMY…DYFS), and 4083 to 4127 (ERIY…FEDY). An N-linked (GlcNAc...) asparagine glycan is attached at Asn-4017. EGF-like domains lie at 4171-4208 (DLPN…GTCN), 4213-4249 (LDDS…ERCE), 4249-4285 (EVNH…PNCG), 4285-4321 (GKTV…DRCQ), 4321-4357 (QYYV…PKCE), 4357-4392 (EVDK…SSCQ), and 4390-4427 (SCQL…TQCE). The N-linked (GlcNAc...) asparagine glycan is linked to Asn-4204. 11 disulfides stabilise this stretch: Cys-4217-Cys-4227, Cys-4221-Cys-4237, Cys-4253-Cys-4263, Cys-4257-Cys-4273, Cys-4275-Cys-4284, Cys-4289-Cys-4299, Cys-4293-Cys-4309, Cys-4311-Cys-4320, Cys-4325-Cys-4335, Cys-4329-Cys-4345, and Cys-4347-Cys-4356. Asn-4381 carries N-linked (GlcNAc...) asparagine glycosylation. 3 cysteine pairs are disulfide-bonded: Cys-4394–Cys-4404, Cys-4398–Cys-4415, and Cys-4417–Cys-4426. A glycan (N-linked (GlcNAc...) asparagine) is linked at Asn-4420. Residues 4445–4467 (AIIVPLVLLVTLITTLVIGLVLC) traverse the membrane as a helical segment. Residues 4468-4599 (KRKRRTKTIR…IEIGIRETVA (132 aa)) lie on the Cytoplasmic side of the membrane. 2 consecutive short sequence motifs (endocytosis signal) follow at residues 4492–4495 (NPSY) and 4559–4562 (NPVY).

This sequence belongs to the LDLR family. Binds LRPAP1, PLAU, PLAT and SERPINE1; binding is followed by internalization and degradation of the ligands. Expressed in thyroid gland and in salivary gland, as well as in adult and fetal brain.

The protein localises to the membrane. Functionally, potential cell surface proteins that bind and internalize ligands in the process of receptor-mediated endocytosis. This chain is Low-density lipoprotein receptor-related protein 1B (LRP1B), found in Homo sapiens (Human).